Reading from the N-terminus, the 170-residue chain is Adenine phosphoribosyltransferase (170 aa).

This sequence belongs to the purine/pyrimidine phosphoribosyltransferase family. As to quaternary structure, homodimer.

It localises to the cytoplasm. It carries out the reaction AMP + diphosphate = 5-phospho-alpha-D-ribose 1-diphosphate + adenine. Its pathway is purine metabolism; AMP biosynthesis via salvage pathway; AMP from adenine: step 1/1. Its function is as follows. Catalyzes a salvage reaction resulting in the formation of AMP, that is energically less costly than de novo synthesis. The chain is Adenine phosphoribosyltransferase from Acholeplasma laidlawii (strain PG-8A).